A 995-amino-acid chain; its full sequence is Pheromone-regulated membrane protein 10 (995 aa).

Disordered regions lie at residues 1–217 (MSSH…GEKH), 253–299 (GRVL…AVEM), 326–407 (DQSF…YIAP), and 425–508 (NPQD…NPDQ). A compositionally biased stretch (low complexity) spans 74–88 (SNSSTTNNSTESSGS). The segment covering 110 to 121 (VKGESGDAHEGS) has biased composition (basic and acidic residues). Residues 157–166 (SRGSVGSSSS) show a composition bias toward low complexity. Over residues 170 to 187 (KGSDDVNEKETNLDHDYD) the composition is skewed to basic and acidic residues. A compositionally biased stretch (gly residues) spans 259–269 (GSGGGGGGGLI). A compositionally biased stretch (acidic residues) spans 283–296 (EEKEVGGGGEDDGA). The segment covering 326–347 (DQSFTYDEPNQSAGSSRNSTAP) has biased composition (polar residues). 2 stretches are compositionally biased toward basic and acidic residues: residues 359 to 371 (DDHKHTDDEDQGK) and 385 to 396 (GNDDPEDQHLLL). The segment covering 495-506 (EADDEDEDEENP) has biased composition (acidic residues). Helical transmembrane passes span 678-698 (VFLYGFGSAMVCPFAFGGGWL), 700-720 (IPVTFGVGLCVGYLQFFVSSM), 726-746 (SVFEITASIVVSFIARGIGSI), 752-772 (FCFSAIAQGSLALILPGYIIL), 794-814 (IIYSLFLGFGITLGAALFGWV), 833-850 (KYRILFVPMFTICLGLIN), 858-878 (PVMMVISCTGYVGTYFAGKHF), 881-901 (VPEFTAAIGAFIVGILGNVYS), 906-926 (GMAVSAMLPAIFVQVPSGIAS), and 965-985 (VEVSIGISVGLFAAALVVYPF).

Belongs to the ThrE exporter (TC 2.A.79) family.

The protein localises to the membrane. The protein is Pheromone-regulated membrane protein 10 of Pichia sorbitophila (strain ATCC MYA-4447 / BCRC 22081 / CBS 7064 / NBRC 10061 / NRRL Y-12695) (Hybrid yeast).